The following is an 89-amino-acid chain: Small ribosomal subunit protein uS14 (89 aa).

It belongs to the universal ribosomal protein uS14 family. As to quaternary structure, part of the 30S ribosomal subunit. Contacts proteins S3 and S10.

Functionally, binds 16S rRNA, required for the assembly of 30S particles and may also be responsible for determining the conformation of the 16S rRNA at the A site. The chain is Small ribosomal subunit protein uS14 from Parabacteroides distasonis (strain ATCC 8503 / DSM 20701 / CIP 104284 / JCM 5825 / NCTC 11152).